The chain runs to 301 residues: Acetylglutamate kinase (301 aa).

Residues 68–69 (GG), Arg90, and Asn195 contribute to the substrate site.

This sequence belongs to the acetylglutamate kinase family. ArgB subfamily.

Its subcellular location is the cytoplasm. It catalyses the reaction N-acetyl-L-glutamate + ATP = N-acetyl-L-glutamyl 5-phosphate + ADP. Its pathway is amino-acid biosynthesis; L-arginine biosynthesis; N(2)-acetyl-L-ornithine from L-glutamate: step 2/4. Catalyzes the ATP-dependent phosphorylation of N-acetyl-L-glutamate. The chain is Acetylglutamate kinase from Pseudomonas putida (strain W619).